We begin with the raw amino-acid sequence, 300 residues long: Iron-dependent extradiol dioxygenase (300 aa).

VOC domains lie at 5–120 and 142–270; these read SLAY…AFHG and GLGH…FGCE. Residue histidine 145 coordinates Fe cation. Substrate-binding residues include histidine 200, histidine 215, aspartate 250, and tyrosine 256. Histidine 215 lines the Fe cation pocket. Residue glutamate 266 participates in Fe cation binding.

The protein belongs to the extradiol ring-cleavage dioxygenase family. As to quaternary structure, homodimer. Fe(2+) is required as a cofactor.

It catalyses the reaction 3,4-dihydroxy-9,10-secoandrosta-1,3,5(10)-triene-9,17-dione + O2 = (1E,2Z)-3-hydroxy-5,9,17-trioxo-4,5:9,10-disecoandrosta-1(10),2-dien-4-oate + H(+). It participates in steroid metabolism; cholesterol metabolism. Its function is as follows. Catalyzes the meta-cleavage of 3,4-dihydroxy-9,10-seconandrost-1,3,5(10)-triene-9,17-dione (3,4-DHSA) to produce 4,5-9,10-diseco-3-hydroxy-5,9,17-trioxoandrosta-1(10),2-diene-4-oic acid (4,9-DSHA). Also involved in biphenyl and polychlorinated biphenyls (PCBs) degradation. In Rhodococcus jostii (strain RHA1), this protein is Iron-dependent extradiol dioxygenase (hsaC).